The following is a 142-amino-acid chain: UPF0275 protein PM0505 (142 aa).

It belongs to the UPF0275 family.

The protein is UPF0275 protein PM0505 of Pasteurella multocida (strain Pm70).